Consider the following 465-residue polypeptide: Glutamyl-tRNA reductase 2 (465 aa).

Residues 62–65 (TCNR), S122, 127–129 (EGQ), and Q133 each bind substrate. Catalysis depends on C63, which acts as the Nucleophile. 204–209 (GAGKMG) contacts NADP(+).

It belongs to the glutamyl-tRNA reductase family.

Its subcellular location is the plastid. The protein resides in the chloroplast. It catalyses the reaction (S)-4-amino-5-oxopentanoate + tRNA(Glu) + NADP(+) = L-glutamyl-tRNA(Glu) + NADPH + H(+). Its pathway is porphyrin-containing compound metabolism; protoporphyrin-IX biosynthesis; 5-aminolevulinate from L-glutamyl-tRNA(Glu): step 1/2. Functionally, catalyzes the NADPH-dependent reduction of glutamyl-tRNA(Glu) to glutamate 1-semialdehyde (GSA). The polypeptide is Glutamyl-tRNA reductase 2 (HEMA2) (Hordeum vulgare (Barley)).